An 89-amino-acid polypeptide reads, in one-letter code: Small ribosomal subunit protein uS15 (89 aa).

The protein belongs to the universal ribosomal protein uS15 family. Part of the 30S ribosomal subunit. Forms a bridge to the 50S subunit in the 70S ribosome, contacting the 23S rRNA.

Functionally, one of the primary rRNA binding proteins, it binds directly to 16S rRNA where it helps nucleate assembly of the platform of the 30S subunit by binding and bridging several RNA helices of the 16S rRNA. In terms of biological role, forms an intersubunit bridge (bridge B4) with the 23S rRNA of the 50S subunit in the ribosome. This is Small ribosomal subunit protein uS15 from Rhizobium rhizogenes (strain K84 / ATCC BAA-868) (Agrobacterium radiobacter).